We begin with the raw amino-acid sequence, 251 residues long: Hydroxyacylglutathione hydrolase (251 aa).

Zn(2+)-binding residues include His59, His61, Asp63, His64, His118, Asp141, and His179.

It belongs to the metallo-beta-lactamase superfamily. Glyoxalase II family. In terms of assembly, monomer. Requires Zn(2+) as cofactor.

It catalyses the reaction an S-(2-hydroxyacyl)glutathione + H2O = a 2-hydroxy carboxylate + glutathione + H(+). It participates in secondary metabolite metabolism; methylglyoxal degradation; (R)-lactate from methylglyoxal: step 2/2. Thiolesterase that catalyzes the hydrolysis of S-D-lactoyl-glutathione to form glutathione and D-lactic acid. The chain is Hydroxyacylglutathione hydrolase from Prochlorococcus marinus (strain NATL2A).